We begin with the raw amino-acid sequence, 471 residues long: 5-hydroxytryptamine receptor 2A (471 aa).

The Extracellular portion of the chain corresponds to 1–80 (MEILCEDNTS…LQEKNWSALL (80 aa)). Asn8, Asn38, Asn44, Asn51, and Asn54 each carry an N-linked (GlcNAc...) asparagine glycan. A helical transmembrane segment spans residues 81-97 (TAVVIILTIAGNILVIM). At 98-111 (AVSLEKKLQNATNY) the chain is on the cytoplasmic side. Residues 112–137 (FLMSLAIADMLLGFLVMPVSMLTILY) traverse the membrane as a helical segment. At 138 to 146 (GYRWPLPSK) the chain is on the extracellular side. Residues 147–171 (LCAVWIYLDVLFSTASIMHLCAISL) form a helical membrane-spanning segment. Cysteines 148 and 227 form a disulfide. Asp155 is a binding site for serotonin. The DRY motif; important for ligand-induced conformation changes motif lies at 172 to 174 (DRY). Residues 172–191 (DRYVAIQNPIHHSRFNSRTK) lie on the Cytoplasmic side of the membrane. Residues 192 to 215 (AFLKIIAVWTISVGVSMPIPVFGL) traverse the membrane as a helical segment. Residues 216 to 232 (QDDSKVFKQGSCLLADD) lie on the Extracellular side of the membrane. The helical transmembrane segment at 233–258 (NFVLIGSFVAFFIPLTIMVITYFLTI) threads the bilayer. The Cytoplasmic portion of the chain corresponds to 259–322 (KSLQKEATLC…QSISNEQKAC (64 aa)). Ser280 carries the post-translational modification Phosphoserine. A helical membrane pass occupies residues 323–348 (KVLGIVFFLFVVMWCPFFITNIMAVI). Residue Asn343 participates in serotonin binding. A disulfide bridge connects residues Cys349 and Cys353. At 349–356 (CKESCNEH) the chain is on the extracellular side. The chain crosses the membrane as a helical span at residues 357–382 (VIGALLNVFVWIGYLSSAVNPLVYTL). Residues 376–380 (NPLVY) carry the NPxxY motif; important for ligand-induced conformation changes and signaling motif. At 383–471 (FNKTYRSAFS…NTVNEKVSCV (89 aa)) the chain is on the cytoplasmic side. A PDZ-binding motif is present at residues 469 to 471 (SCV).

It belongs to the G-protein coupled receptor 1 family. Interacts (via C-terminus) with MPDZ and PATJ. May interact (via C-terminus) with MPP3, PRDX6, DLG4, DLG1, CASK, APBA1 and MAGI2. Interacts with GRM2 and DRD2; this may affect signaling.

Its subcellular location is the cell membrane. The protein resides in the cell projection. The protein localises to the dendrite. It localises to the axon. It is found in the cytoplasmic vesicle. Its subcellular location is the membrane. The protein resides in the caveola. The protein localises to the presynapse. Its activity is regulated as follows. G-protein coupled receptor activity is regulated by lipids: oleamide increases HTR2A-mediated activity. Functionally, G-protein coupled receptor for 5-hydroxytryptamine (serotonin). Also functions as a receptor for various drugs and psychoactive substances, including mescaline, psilocybin, 1-(2,5-dimethoxy-4-iodophenyl)-2-aminopropane (DOI) and lysergic acid diethylamide (LSD). Ligand binding causes a conformation change that triggers signaling via guanine nucleotide-binding proteins (G proteins) and modulates the activity of downstream effectors. HTR2A is coupled to G(q)/G(11) G alpha proteins and activates phospholipase C-beta, releasing diacylglycerol (DAG) and inositol 1,4,5-trisphosphate (IP3) second messengers that modulate the activity of phosphatidylinositol 3-kinase and promote the release of Ca(2+) ions from intracellular stores, respectively. Beta-arrestin family members inhibit signaling via G proteins and mediate activation of alternative signaling pathways. Affects neural activity, perception, cognition and mood. Plays a role in the regulation of behavior, including responses to anxiogenic situations and psychoactive substances. Plays a role in intestinal smooth muscle contraction, and may play a role in arterial vasoconstriction. This is 5-hydroxytryptamine receptor 2A (HTR2A) from Cricetulus griseus (Chinese hamster).